We begin with the raw amino-acid sequence, 818 residues long: Dapper 1-A (818 aa).

Over residues Met1–Pro10 the composition is skewed to pro residues. 5 disordered regions span residues Met1–His30, Val60–Asp80, Ile122–Gly144, Asn455–Leu486, and Glu510–Gln530. The interaction with tcf7l1-A stretch occupies residues Met1–Ser337. The segment covering Asp21–His30 has biased composition (basic and acidic residues). The stretch at Ser79–Thr130 forms a coiled coil. Residues Ile122 to Ser132 are compositionally biased toward basic and acidic residues. Polar residues predominate over residues Asn455–Leu485. The span at Ser512–Ser524 shows a compositional bias: basic and acidic residues. The short motif at Met815–Val818 is the PDZ-binding element.

The protein belongs to the dapper family. As to quaternary structure, interacts with dbf4 and tcf7l1-A. Interacts with dvl2/dsh via the C-terminus. Expressed in the animal and dorsal marginal regions at late blastula and early gastrula stages. Expressed predominantly in the anterior neural plate at neurulation. Expressed mainly in the ectodermal placodes, including the eye anlagen and the otic vesicle, at later stages of development.

It is found in the cytoplasm. The protein localises to the nucleus. Its function is as follows. Involved in regulation of intracellular signaling pathways during development. Specifically thought to play a role in canonical and/or non-canonical Wnt signaling pathways through interaction with DSH (Dishevelled) family proteins. Binds to dvl2/dsh and impedes the degradation of beta-catenin (ctnnb1-A and possibly ctnnb1-B), thereby enhancing the transcriptional activation of target genes of the Wnt signaling pathway. Also promotes catenin delta/ctnnd1 stability which in turn promotes zbtb33/kaiso sequestration and thus is involved in the regulation of zbtb33/kaiso-mediated transcriptional repression. May also bind to and directly stimulate the transcriptional activity of tcf7l1-A. Required for eye development and neural patterning. The sequence is that of Dapper 1-A (dact1-a) from Xenopus laevis (African clawed frog).